The following is a 289-amino-acid chain: 2-dehydro-3-deoxyphosphooctonate aldolase (289 aa).

The protein belongs to the KdsA family.

The protein resides in the cytoplasm. It carries out the reaction D-arabinose 5-phosphate + phosphoenolpyruvate + H2O = 3-deoxy-alpha-D-manno-2-octulosonate-8-phosphate + phosphate. Its pathway is carbohydrate biosynthesis; 3-deoxy-D-manno-octulosonate biosynthesis; 3-deoxy-D-manno-octulosonate from D-ribulose 5-phosphate: step 2/3. It participates in bacterial outer membrane biogenesis; lipopolysaccharide biosynthesis. The chain is 2-dehydro-3-deoxyphosphooctonate aldolase from Cupriavidus necator (strain ATCC 17699 / DSM 428 / KCTC 22496 / NCIMB 10442 / H16 / Stanier 337) (Ralstonia eutropha).